The following is an 85-amino-acid chain: uncharacterized protein (85 aa).

The next 2 membrane-spanning stretches (helical) occupy residues 13 to 35 (KWLA…FQPL) and 59 to 81 (EGIV…HLLL).

The protein localises to the cell membrane. This is an uncharacterized protein from Archaeoglobus fulgidus (strain ATCC 49558 / DSM 4304 / JCM 9628 / NBRC 100126 / VC-16).